A 237-amino-acid chain; its full sequence is MAKDTTGRMRVTVKSGGRMKLSSKLWLERQLNDPYVAQAKRDGYRSRAAYKLTEIDDKFRLLKSGMAVVDLGAAPGGWSQVAAKKVGAADGRGKVVAIDLLEMGEVPGVTFAQLDFLDPSAPERLREMLGGGADIVMSDMAANTTGHRKTDQLRIVGLVETAAMFASEVLKPGGTFLAKVFQSGADASLMTELKRDYASVKHVKPAASRKDSSERYLLATGFRGGAARDAEAAAETE.

Positions 76, 78, 99, 115, and 139 each coordinate S-adenosyl-L-methionine. Residue Lys-179 is the Proton acceptor of the active site.

This sequence belongs to the class I-like SAM-binding methyltransferase superfamily. RNA methyltransferase RlmE family.

It localises to the cytoplasm. The catalysed reaction is uridine(2552) in 23S rRNA + S-adenosyl-L-methionine = 2'-O-methyluridine(2552) in 23S rRNA + S-adenosyl-L-homocysteine + H(+). Functionally, specifically methylates the uridine in position 2552 of 23S rRNA at the 2'-O position of the ribose in the fully assembled 50S ribosomal subunit. The polypeptide is Ribosomal RNA large subunit methyltransferase E (Rhodopseudomonas palustris (strain ATCC BAA-98 / CGA009)).